The following is a 355-amino-acid chain: cAMP-dependent protein kinase catalytic subunit PRKX (355 aa).

At methionine 1 the chain carries N-acetylmethionine. The interval 1–42 (MEPPAGAAATVKDPDHDPVKTKVSAPAADPKPRTSSQKAGHS) is disordered. The Protein kinase domain occupies 46–300 (WDTIATVGTG…AEDIKRHRWF (255 aa)). ATP is bound by residues 52–60 (VGTGTFGRV) and lysine 75. The active-site Proton acceptor is aspartate 169. Threonine 200 is subject to Phosphothreonine. One can recognise an AGC-kinase C-terminal domain in the interval 301–355 (RGVEWESVPQRKLKPPIVPKLSGDGDISNFETYPESELDKTPSVSDKDLETFKNF). The disordered stretch occupies residues 316–355 (PIVPKLSGDGDISNFETYPESELDKTPSVSDKDLETFKNF). The segment covering 337 to 355 (ELDKTPSVSDKDLETFKNF) has biased composition (basic and acidic residues).

This sequence belongs to the protein kinase superfamily. AGC Ser/Thr protein kinase family. cAMP subfamily. Like other cAMP-dependent protein kinases, the inactive holoenzyme is probably composed of 2 PRKX catalytic subunits and a dimer of regulatory subunits. Interacts (cAMP-dependent) specifically with the regulatory subunits PRKAR1A and PRKAR1B. Compared to other cAMP-dependent serine/threonine protein kinases, does not interact with the 2 other PKA regulatory subunits PRKAR2A and PRKAR2B. Interacts with PIN1 (via WW domain). Interacts with cAMP-dependent protein kinase inhibitor/PKI proteins; inhibits PRKX. Interacts with GPKOW. Interacts with SMAD6. Interacts with PKD1; involved in differentiation and controlled morphogenesis of the kidney. Phosphorylated; autophosphorylates in vitro. In terms of tissue distribution, widely expressed.

The protein localises to the cytoplasm. It localises to the nucleus. It catalyses the reaction L-seryl-[protein] + ATP = O-phospho-L-seryl-[protein] + ADP + H(+). The enzyme catalyses L-threonyl-[protein] + ATP = O-phospho-L-threonyl-[protein] + ADP + H(+). Binding of cAMP to the PRKAR1A or PRKAR1B regulatory subunits induces dissociation of the holoenzyme heterotetramer. The released monomeric PRKX is then active and able to phosphorylate its substrates. In terms of biological role, serine/threonine protein kinase regulated by and mediating cAMP signaling in cells. Acts through phosphorylation of downstream targets that may include CREB, SMAD6 and PKD1 and has multiple functions in cellular differentiation and epithelial morphogenesis. Regulates myeloid cell differentiation through SMAD6 phosphorylation. Involved in nephrogenesis by stimulating renal epithelial cell migration and tubulogenesis. Also involved in angiogenesis through stimulation of endothelial cell proliferation, migration and vascular-like structure formation. The sequence is that of cAMP-dependent protein kinase catalytic subunit PRKX (Prkx) from Mus musculus (Mouse).